Reading from the N-terminus, the 213-residue chain is Phosphoribosyl-dephospho-CoA transferase (213 aa).

Active-site residues include Asp-135 and Asp-137.

This sequence belongs to the MdcG family.

The catalysed reaction is apo-[malonate decarboxylase ACP] + 2'-(5''-triphospho-alpha-D-ribosyl)-3'-dephospho-CoA = holo-[malonate decarboxylase ACP] + diphosphate. Functionally, transfers 2'-(5-triphosphoribosyl)-3'-dephosphocoenzyme-A to the apo-[acyl-carrier-protein] of the malonate decarboxylase to yield holo-[acyl-carrier-protein]. The protein is Phosphoribosyl-dephospho-CoA transferase of Xanthomonas euvesicatoria pv. vesicatoria (strain 85-10) (Xanthomonas campestris pv. vesicatoria).